We begin with the raw amino-acid sequence, 542 residues long: CTP synthase (542 aa).

The interval 1 to 265 is amidoligase domain; the sequence is MTRYIFVTGG…DEIIVERFGL (265 aa). Serine 13 contacts CTP. Position 13 (serine 13) interacts with UTP. Residues 14–19 and aspartate 71 contribute to the ATP site; that span reads SLGKGI. Mg(2+) contacts are provided by aspartate 71 and glutamate 139. Residues 146–148, 186–191, and lysine 222 contribute to the CTP site; these read DIE and KTKPTQ. Residues 186 to 191 and lysine 222 contribute to the UTP site; that span reads KTKPTQ. Residues 290 to 541 form the Glutamine amidotransferase type-1 domain; it reads TIAMVGKYME…VRAALENAGG (252 aa). Glycine 351 contributes to the L-glutamine binding site. The Nucleophile; for glutamine hydrolysis role is filled by cysteine 378. L-glutamine is bound by residues 379 to 382, glutamate 402, and arginine 469; that span reads LGLQ. Active-site residues include histidine 514 and glutamate 516.

This sequence belongs to the CTP synthase family. As to quaternary structure, homotetramer.

It catalyses the reaction UTP + L-glutamine + ATP + H2O = CTP + L-glutamate + ADP + phosphate + 2 H(+). It carries out the reaction L-glutamine + H2O = L-glutamate + NH4(+). The catalysed reaction is UTP + NH4(+) + ATP = CTP + ADP + phosphate + 2 H(+). The protein operates within pyrimidine metabolism; CTP biosynthesis via de novo pathway; CTP from UDP: step 2/2. Its activity is regulated as follows. Allosterically activated by GTP, when glutamine is the substrate; GTP has no effect on the reaction when ammonia is the substrate. The allosteric effector GTP functions by stabilizing the protein conformation that binds the tetrahedral intermediate(s) formed during glutamine hydrolysis. Inhibited by the product CTP, via allosteric rather than competitive inhibition. Functionally, catalyzes the ATP-dependent amination of UTP to CTP with either L-glutamine or ammonia as the source of nitrogen. Regulates intracellular CTP levels through interactions with the four ribonucleotide triphosphates. This Hahella chejuensis (strain KCTC 2396) protein is CTP synthase.